The following is a 314-amino-acid chain: Formate-nitrite transporter (314 aa).

The Cytoplasmic segment spans residues Met1–Ala47. Residues Ile48 to Phe68 traverse the membrane as a helical segment. The Extracellular segment spans residues Tyr69–Val77. The helical transmembrane segment at Gly78–Ile98 threads the bilayer. At Cys99–Arg128 the chain is on the cytoplasmic side. The helical transmembrane segment at Val129 to Ser149 threads the bilayer. The Extracellular segment spans residues Tyr150–Cys185. A helical membrane pass occupies residues Ile186 to Ile206. Over Lys207–Gly211 the chain is Cytoplasmic. The chain crosses the membrane as a helical span at residues Leu212–Ile232. Topologically, residues Ala233–Pro260 are extracellular. Residues Thr261 to Tyr281 form a helical membrane-spanning segment. The Cytoplasmic segment spans residues Arg282–Ile314.

This sequence belongs to the FNT transporter (TC 1.A.16) family. In terms of assembly, homopentamer.

Its subcellular location is the cell membrane. The protein resides in the vacuole membrane. It catalyses the reaction (S)-lactate(in) + H(+)(in) = (S)-lactate(out) + H(+)(out). The enzyme catalyses formate(in) + H(+)(in) = formate(out) + H(+)(out). The catalysed reaction is pyruvate(out) + H(+)(out) = pyruvate(in) + H(+)(in). It carries out the reaction acetate(out) + H(+)(out) = acetate(in) + H(+)(in). With respect to regulation, inhibited by the Malaria Box compound MMV007839 and its derivatives BH296 and BH267.meta. Functionally, monocarboxylate-proton symporter that mediates the efflux of the waste product lactate in the intraerythrocytic parasites; active in acidic-to-neutral pH range. Transports L-lactate. This is Formate-nitrite transporter from Plasmodium malariae.